We begin with the raw amino-acid sequence, 199 residues long: NADH-quinone oxidoreductase subunit I (199 aa).

4Fe-4S ferredoxin-type domains follow at residues L45–A75 and R91–E120. The [4Fe-4S] cluster site is built by C55, C58, C61, C65, C100, C103, C106, and C110. The disordered stretch occupies residues G164 to P199. Positions T182 to P199 are enriched in basic and acidic residues.

This sequence belongs to the complex I 23 kDa subunit family. In terms of assembly, NDH-1 is composed of 14 different subunits. Subunits NuoA, H, J, K, L, M, N constitute the membrane sector of the complex. It depends on [4Fe-4S] cluster as a cofactor.

It localises to the cell membrane. The enzyme catalyses a quinone + NADH + 5 H(+)(in) = a quinol + NAD(+) + 4 H(+)(out). Its function is as follows. NDH-1 shuttles electrons from NADH, via FMN and iron-sulfur (Fe-S) centers, to quinones in the respiratory chain. The immediate electron acceptor for the enzyme in this species is believed to be ubiquinone. Couples the redox reaction to proton translocation (for every two electrons transferred, four hydrogen ions are translocated across the cytoplasmic membrane), and thus conserves the redox energy in a proton gradient. The polypeptide is NADH-quinone oxidoreductase subunit I (Acidothermus cellulolyticus (strain ATCC 43068 / DSM 8971 / 11B)).